The primary structure comprises 189 residues: Glutathione-dependent formaldehyde-activating enzyme (189 aa).

Residues 20–167 enclose the CENP-V/GFA domain; the sequence is FAGGTLVCKC…LKELGLEPYD (148 aa). Zn(2+) contacts are provided by C27, C29, C48, C50, C53, C95, and C98.

It belongs to the Gfa family. Zn(2+) is required as a cofactor.

The catalysed reaction is S-(hydroxymethyl)glutathione = glutathione + formaldehyde. The protein operates within one-carbon metabolism; formaldehyde degradation; formate from formaldehyde (glutathione route): step 1/3. Its function is as follows. Catalyzes the condensation of formaldehyde and glutathione to S-hydroxymethylglutathione. In Rhodopseudomonas palustris (strain BisA53), this protein is Glutathione-dependent formaldehyde-activating enzyme.